A 280-amino-acid polypeptide reads, in one-letter code: Diaminopimelate epimerase (280 aa).

Positions 11 and 62 each coordinate substrate. Catalysis depends on Cys71, which acts as the Proton donor. Substrate is bound by residues 72–73 (GN), Asn160, Asn193, and 211–212 (ER). Cys220 functions as the Proton acceptor in the catalytic mechanism. 221–222 (GT) provides a ligand contact to substrate.

This sequence belongs to the diaminopimelate epimerase family. Homodimer.

The protein localises to the cytoplasm. It catalyses the reaction (2S,6S)-2,6-diaminopimelate = meso-2,6-diaminopimelate. It functions in the pathway amino-acid biosynthesis; L-lysine biosynthesis via DAP pathway; DL-2,6-diaminopimelate from LL-2,6-diaminopimelate: step 1/1. Its function is as follows. Catalyzes the stereoinversion of LL-2,6-diaminopimelate (L,L-DAP) to meso-diaminopimelate (meso-DAP), a precursor of L-lysine and an essential component of the bacterial peptidoglycan. In Acetivibrio thermocellus (strain ATCC 27405 / DSM 1237 / JCM 9322 / NBRC 103400 / NCIMB 10682 / NRRL B-4536 / VPI 7372) (Clostridium thermocellum), this protein is Diaminopimelate epimerase.